A 789-amino-acid polypeptide reads, in one-letter code: Aryl hydrocarbon receptor nuclear translocator (789 aa).

The span at Met1–Val14 shows a compositional bias: polar residues. Residues Met1–Ile97 are disordered. Position 2 is an N-acetylalanine (Ala2). Over residues Ser26–Ala35 the composition is skewed to gly residues. Residue Lys58 forms a Glycyl lysine isopeptide (Lys-Gly) (interchain with G-Cter in SUMO2) linkage. Residues Leu60–Ile97 are compositionally biased toward basic and acidic residues. At Ser77 the chain carries Phosphoserine. Residues Arg88–Lys128 are DNA-binding. A bHLH domain is found at Leu89–Leu142. The segment at Leu112 to Ile168 is required for heterodimer formation with HIF1A. Residues Leu112–Ile264 form a required for heterodimer formation with EPAS1 region. 2 consecutive PAS domains span residues Asp161–Arg235 and Pro349–Lys419. Residues Leu167–Ala171 are mediates the transcription activity and dimerization of the AHR:ARNT complex. In terms of domain architecture, PAC spans Ser424–Ser467. Residues Lys465–Arg481 are compositionally biased toward polar residues. Disordered regions lie at residues Lys465–Leu492 and Thr672–Glu789. The span at Thr672 to Ser696 shows a compositional bias: low complexity. Over residues Thr708 to Thr719 the composition is skewed to polar residues. 2 stretches are compositionally biased toward low complexity: residues Val723 to Gln733 and Gln743 to Pro756.

Monomer. Homodimer only upon binding to a DNA. Efficient DNA binding requires dimerization with another bHLH protein. Interacts with TACC3. Interacts with HIF1A, EPAS1, NPAS1 and NPAS3; forms a heterodimer that binds core DNA sequence 5'-TACGTG-3' within the hypoxia response element (HRE) of target gene promoters. Forms a heterodimer with AHRR, as well as with other bHLH proteins. Interacts with NOCA7. Interacts with TACC3. Interacts with AHR; the heterodimer ARNT:AHR binds to core DNA sequence 5'-TGCGTG-3' within the dioxin response element (DRE) of target gene promoters and activates their transcription. Interacts with SIM1 and NPAS4.

It is found in the nucleus. In terms of biological role, required for activity of the AHR. Upon ligand binding, AHR translocates into the nucleus, where it heterodimerizes with ARNT and induces transcription by binding to xenobiotic response elements (XRE). Not required for the ligand-binding subunit to translocate from the cytosol to the nucleus after ligand binding. The complex initiates transcription of genes involved in the regulation of a variety of biological processes, including angiogenesis, hematopoiesis, drug and lipid metabolism, cell motility and immune modulation. The heterodimer binds to core DNA sequence 5'-TACGTG-3' within the hypoxia response element (HRE) of target gene promoters and functions as a transcriptional regulator of the adaptive response to hypoxia. The heterodimer ARNT:AHR binds to core DNA sequence 5'-TGCGTG-3' within the dioxin response element (DRE) of target gene promoters and activates their transcription. The polypeptide is Aryl hydrocarbon receptor nuclear translocator (Homo sapiens (Human)).